A 141-amino-acid chain; its full sequence is Hemoglobin subunit alpha (141 aa).

Residues 1–141 (VLSPADKTNV…VSTVLTSKYR (141 aa)) form the Globin domain. Position 3 is a phosphoserine (serine 3). An N6-succinyllysine modification is found at lysine 7. Threonine 8 carries the phosphothreonine modification. Lysine 11 is modified (N6-succinyllysine). Lysine 16 bears the N6-acetyllysine; alternate mark. Residue lysine 16 is modified to N6-succinyllysine; alternate. A Phosphotyrosine modification is found at tyrosine 24. Serine 35 carries the post-translational modification Phosphoserine. At lysine 40 the chain carries N6-succinyllysine. A Phosphoserine modification is found at serine 49. Position 58 (histidine 58) interacts with O2. Histidine 87 is a binding site for heme b. The residue at position 102 (serine 102) is a Phosphoserine. Position 108 is a phosphothreonine (threonine 108). A phosphoserine mark is found at serine 124 and serine 131. Phosphothreonine occurs at positions 134 and 137. Residue serine 138 is modified to Phosphoserine.

It belongs to the globin family. As to quaternary structure, heterotetramer of two alpha chains and two beta chains. In terms of tissue distribution, red blood cells.

Functionally, involved in oxygen transport from the lung to the various peripheral tissues. The polypeptide is Hemoglobin subunit alpha (Otospermophilus beecheyi (California ground squirrel)).